The chain runs to 102 residues: Nucleoid-associated protein WIGBR5260 (102 aa).

Belongs to the YbaB/EbfC family. As to quaternary structure, homodimer.

It localises to the cytoplasm. The protein resides in the nucleoid. Binds to DNA and alters its conformation. May be involved in regulation of gene expression, nucleoid organization and DNA protection. The protein is Nucleoid-associated protein WIGBR5260 of Wigglesworthia glossinidia brevipalpis.